The chain runs to 193 residues: uncharacterized protein (193 aa).

Positions 1–26 are cleaved as a signal peptide; that stretch reads MRNVFVGALCMCGMSFVFSDSVRSAA.

This is an uncharacterized protein from Treponema pallidum (strain Nichols).